Here is a 147-residue protein sequence, read N- to C-terminus: Putative HTH-type transcriptional regulator slr0846 (147 aa).

Positions 2–130 constitute an HTH rrf2-type domain; sequence KLTTKSHYSV…YSITLADLYY (129 aa).

This is Putative HTH-type transcriptional regulator slr0846 from Synechocystis sp. (strain ATCC 27184 / PCC 6803 / Kazusa).